A 324-amino-acid chain; its full sequence is Malate dehydrogenase (324 aa).

Residues 20–25 (GAGNVG) and Asp44 contribute to the NAD(+) site. Arg93 and Arg99 together coordinate substrate. NAD(+) contacts are provided by residues Asn106 and 129-131 (VTN). Residues Asn131 and Arg162 each coordinate substrate. Catalysis depends on His186, which acts as the Proton acceptor.

The protein belongs to the LDH/MDH superfamily. MDH type 3 family.

The catalysed reaction is (S)-malate + NAD(+) = oxaloacetate + NADH + H(+). Catalyzes the reversible oxidation of malate to oxaloacetate. The protein is Malate dehydrogenase of Synechocystis sp. (strain ATCC 27184 / PCC 6803 / Kazusa).